Here is a 523-residue protein sequence, read N- to C-terminus: 2-isopropylmalate synthase (523 aa).

The region spanning Val-5–Trp-267 is the Pyruvate carboxyltransferase domain. Positions 14, 202, 204, and 238 each coordinate Mn(2+). Positions Arg-392–Val-523 are regulatory domain.

It belongs to the alpha-IPM synthase/homocitrate synthase family. LeuA type 1 subfamily. Homodimer. Mn(2+) is required as a cofactor.

It is found in the cytoplasm. The catalysed reaction is 3-methyl-2-oxobutanoate + acetyl-CoA + H2O = (2S)-2-isopropylmalate + CoA + H(+). It functions in the pathway amino-acid biosynthesis; L-leucine biosynthesis; L-leucine from 3-methyl-2-oxobutanoate: step 1/4. In terms of biological role, catalyzes the condensation of the acetyl group of acetyl-CoA with 3-methyl-2-oxobutanoate (2-ketoisovalerate) to form 3-carboxy-3-hydroxy-4-methylpentanoate (2-isopropylmalate). This is 2-isopropylmalate synthase from Escherichia coli (strain SMS-3-5 / SECEC).